A 105-amino-acid chain; its full sequence is Small ribosomal subunit protein uS10 (105 aa).

This sequence belongs to the universal ribosomal protein uS10 family. As to quaternary structure, part of the 30S ribosomal subunit.

Its function is as follows. Involved in the binding of tRNA to the ribosomes. This chain is Small ribosomal subunit protein uS10, found in Picosynechococcus sp. (strain ATCC 27264 / PCC 7002 / PR-6) (Agmenellum quadruplicatum).